Here is a 281-residue protein sequence, read N- to C-terminus: Sorbose reductase SOU1 (281 aa).

Positions 47, 74, and 119 each coordinate NADP(+). Catalysis depends on proton donor residues serine 173 and tyrosine 188. Tyrosine 188, lysine 192, isoleucine 221, and threonine 223 together coordinate NADP(+). Lysine 192 functions as the Lowers pKa of active site Tyr in the catalytic mechanism.

It belongs to the short-chain dehydrogenases/reductases (SDR) family. Homotetramer.

It carries out the reaction D-sorbitol + NADP(+) = keto-L-sorbose + NADPH + H(+). It participates in carbohydrate degradation; L-sorbose degradation. In terms of biological role, catalyzes the NADP dependent reduction of L-sorbose to D-glucitol. Can also convert fructose to mannitol, but less efficiently. This chain is Sorbose reductase SOU1 (SOU1), found in Candida albicans (strain SC5314 / ATCC MYA-2876) (Yeast).